Consider the following 75-residue polypeptide: Tautomerase PptA (75 aa).

Pro2 (proton acceptor; via imino nitrogen) is an active-site residue.

The protein belongs to the 4-oxalocrotonate tautomerase family. PptA subfamily. In terms of assembly, homodimer.

The protein localises to the cytoplasm. The protein is Tautomerase PptA of Klebsiella pneumoniae (strain 342).